Reading from the N-terminus, the 298-residue chain is MYIPIITGGKSKEREISLTSAKNVFNSISNLGYKPVILDLIDDDFINKIQNYKFAFNVVHGDYGEDGRLPSLLEILGIDYTCSNPETCIATYDKFIFYSLFKNYIQMPQTTLTNKLILPPFEYPFIIKPRKSGSSKGVYIIHNENEYKFYLEKDLKEFQEVLVQEYIKGREITISYIQKNEEFILLPILEIIPKKEFYDYEAKYTNGLTELKPQLNSPEKIIQKINEIGNHVMQTLTFKDMFRIDAILKDDEVYVLEINTVPGLTELSDLPTSALAAGISFDELINIIIKNHVARVAG.

Positions 97-290 (FYSLFKNYIQ…FDELINIIIK (194 aa)) constitute an ATP-grasp domain. 124-173 (PFIIKPRKSGSSKGVYIIHNENEYKFYLEKDLKEFQEVLVQEYIKGREIT) provides a ligand contact to ATP. Positions 245, 257, and 259 each coordinate Mg(2+).

It belongs to the D-alanine--D-alanine ligase family. It depends on Mg(2+) as a cofactor. The cofactor is Mn(2+).

It is found in the cytoplasm. The enzyme catalyses 2 D-alanine + ATP = D-alanyl-D-alanine + ADP + phosphate + H(+). The protein operates within cell wall biogenesis; peptidoglycan biosynthesis. Cell wall formation. The chain is D-alanine--D-alanine ligase from Petrotoga mobilis (strain DSM 10674 / SJ95).